Reading from the N-terminus, the 34-residue chain is NU-buthitoxin-Ptr1a (34 aa).

3 disulfide bridges follow: Cys6-Cys27, Cys12-Cys32, and Cys16-Cys34.

In terms of tissue distribution, expressed by the venom gland.

It localises to the secreted. In terms of biological role, toxin that acts as an agonist on melanocortin receptors (MC1R, MC3R, MC5R, MC5R). After binding to MC1R, the peptide activates the hMC1R/Gs pathway, but after binding to MC4R, it is not able to activate or antagonize the MC4R/Gs pathway. Inhibits melanocyte stimulating hormone (MSH)-binding to human receptors (Ki=2.9 uM to MC1R, Ki=3.9 uM to MC3R, Ki=2.6 uM to MC4R, Ki=2.2 uM to MC5R). This toxin is structurally unrelated to the natural agonists. The protein is NU-buthitoxin-Ptr1a of Parabuthus transvaalicus (Transvaal thick-tailed scorpion).